Reading from the N-terminus, the 222-residue chain is Holliday junction branch migration complex subunit RuvA (222 aa).

The segment at 1–67 (MISWLNGLKI…EDGSQLIGFL (67 aa)) is domain I. Positions 68–146 (NKLERDLFRK…DLIGSSLKKT (79 aa)) are domain II. The segment at 147 to 155 (NNHLELEYE) is flexible linker. Residues 155–222 (ETNVADEVRS…TLIRINTESG (68 aa)) form a domain III region.

It belongs to the RuvA family. Homotetramer. Forms an RuvA(8)-RuvB(12)-Holliday junction (HJ) complex. HJ DNA is sandwiched between 2 RuvA tetramers; dsDNA enters through RuvA and exits via RuvB. An RuvB hexamer assembles on each DNA strand where it exits the tetramer. Each RuvB hexamer is contacted by two RuvA subunits (via domain III) on 2 adjacent RuvB subunits; this complex drives branch migration. In the full resolvosome a probable DNA-RuvA(4)-RuvB(12)-RuvC(2) complex forms which resolves the HJ.

The protein resides in the cytoplasm. Its function is as follows. The RuvA-RuvB-RuvC complex processes Holliday junction (HJ) DNA during genetic recombination and DNA repair, while the RuvA-RuvB complex plays an important role in the rescue of blocked DNA replication forks via replication fork reversal (RFR). RuvA specifically binds to HJ cruciform DNA, conferring on it an open structure. The RuvB hexamer acts as an ATP-dependent pump, pulling dsDNA into and through the RuvAB complex. HJ branch migration allows RuvC to scan DNA until it finds its consensus sequence, where it cleaves and resolves the cruciform DNA. In Prochlorococcus marinus (strain SARG / CCMP1375 / SS120), this protein is Holliday junction branch migration complex subunit RuvA.